A 220-amino-acid chain; its full sequence is Protein-L-isoaspartate O-methyltransferase (220 aa).

Serine 69 is an active-site residue.

Belongs to the methyltransferase superfamily. L-isoaspartyl/D-aspartyl protein methyltransferase family.

The protein localises to the cytoplasm. It catalyses the reaction [protein]-L-isoaspartate + S-adenosyl-L-methionine = [protein]-L-isoaspartate alpha-methyl ester + S-adenosyl-L-homocysteine. Catalyzes the methyl esterification of L-isoaspartyl residues in peptides and proteins that result from spontaneous decomposition of normal L-aspartyl and L-asparaginyl residues. It plays a role in the repair and/or degradation of damaged proteins. This Alcanivorax borkumensis (strain ATCC 700651 / DSM 11573 / NCIMB 13689 / SK2) protein is Protein-L-isoaspartate O-methyltransferase.